Reading from the N-terminus, the 411-residue chain is Citrate synthase (411 aa).

Catalysis depends on residues His-304 and Asp-363.

This sequence belongs to the citrate synthase family.

The catalysed reaction is oxaloacetate + acetyl-CoA + H2O = citrate + CoA + H(+). Its pathway is carbohydrate metabolism; tricarboxylic acid cycle; isocitrate from oxaloacetate: step 1/2. In Rickettsia canadensis, this protein is Citrate synthase (gltA).